The chain runs to 262 residues: tRNA (guanine-N(7)-)-methyltransferase (262 aa).

The tract at residues 1–58 (MLPQDTNTDPLPGDDAESASGKSADASQGTPNPGDEVAHPRRIRSFVRRAGRTSTGQQ) is disordered. Residues 40–51 (PRRIRSFVRRAG) are compositionally biased toward basic residues. S-adenosyl-L-methionine is bound by residues Glu-92, Glu-117, Asp-144, and Asp-167. The active site involves Asp-167. Residue Lys-171 participates in substrate binding. The interaction with RNA stretch occupies residues 173 to 178 (RHNKRR). Residues Asp-203 and 241–244 (TKFE) each bind substrate.

The protein belongs to the class I-like SAM-binding methyltransferase superfamily. TrmB family.

It catalyses the reaction guanosine(46) in tRNA + S-adenosyl-L-methionine = N(7)-methylguanosine(46) in tRNA + S-adenosyl-L-homocysteine. The protein operates within tRNA modification; N(7)-methylguanine-tRNA biosynthesis. Catalyzes the formation of N(7)-methylguanine at position 46 (m7G46) in tRNA. The protein is tRNA (guanine-N(7)-)-methyltransferase of Cupriavidus metallidurans (strain ATCC 43123 / DSM 2839 / NBRC 102507 / CH34) (Ralstonia metallidurans).